Consider the following 226-residue polypeptide: MVEIRLSSGKILNKKVHKIGVIALGSFLENHGAVLPIDTDIKIASYIALNASILTGAKFLGVVIPSTEYEYVKHGIHNKVDEILDYLRFMINWGKKIGVEEIIIVNCHGGNVLIEEHLKNLEKELDVSIEMINITFTHASTEEVSVGEVIGISDVKRLEEHTNFEKYPEVGMVGLKEARRNNPIIDQEAKEVETSGVKVDRELGRSILKNAIEKVVKKIEEKIAKK.

Positions 29, 31, 40, and 108 each coordinate Fe cation.

Belongs to the creatininase superfamily. FAPy deformylase family. Homodimer. Fe(2+) serves as cofactor. The cofactor is Zn(2+).

It carries out the reaction 2-amino-5-formylamino-6-(5-phospho-D-ribosylamino)pyrimidin-4(3H)-one + H2O = 2,5-diamino-6-(1-D-ribosylamino)pyrimidin-4(3H)-one 5'-phosphate + formate + H(+). Its pathway is cofactor biosynthesis; coenzyme F420 biosynthesis. It participates in cofactor biosynthesis; riboflavin biosynthesis. In terms of biological role, catalyzes the hydrolysis of the formamide of 2-amino-5-formylamino-6-ribosylamino-4(3H)-pyrimidinone 5'-monophosphate (FAPy) to form 2,5-diamino-6-ribosylamino-4(3H)-pyrimidinone 5'-phosphate (APy). The sequence is that of 2-amino-5-formylamino-6-ribosylaminopyrimidin-4(3H)-one 5'-monophosphate deformylase from Methanocaldococcus vulcanius (strain ATCC 700851 / DSM 12094 / M7) (Methanococcus vulcanius).